The chain runs to 381 residues: Homoserine O-succinyltransferase (381 aa).

Residues 45–360 enclose the AB hydrolase-1 domain; the sequence is NAVLVCHALN…PHGHDAFLLD (316 aa). Ser-151 (nucleophile) is an active-site residue. Residue Arg-221 coordinates substrate. Active-site residues include Asp-321 and His-354. A substrate-binding site is contributed by Asp-355.

This sequence belongs to the AB hydrolase superfamily. MetX family. In terms of assembly, homodimer.

It is found in the cytoplasm. It catalyses the reaction L-homoserine + succinyl-CoA = O-succinyl-L-homoserine + CoA. Its pathway is amino-acid biosynthesis; L-methionine biosynthesis via de novo pathway; O-succinyl-L-homoserine from L-homoserine: step 1/1. Functionally, transfers a succinyl group from succinyl-CoA to L-homoserine, forming succinyl-L-homoserine. This is Homoserine O-succinyltransferase from Burkholderia multivorans (strain ATCC 17616 / 249).